Consider the following 819-residue polypeptide: MRYDPGLIEEKWQKFWENEQVFKAEEDETKTKYYVLDMFPYPSGAGLHVGHLIGYTATDIVARYKRAQGFSVLHPMGWDSFGLPAEQYAIRTGTHPRETTEKNIANFKKQLTAMGFSYDESREFATSDPEYYKWTQKLFLILYEKGLAYMADMAVNYCPELGTVLSNEEIENGFSVDGGYPVERRMLRQWVLRITAFADQLLEGLDELDWPESVKQLQKNWIGKSSGASVNFATEHGVIEVFTTRPDTLIGVSFLALAPEHPLVDLLTSDEQKAVVAQYIKETQSKSERDRISEMKTKSGVFTGSYAKHPVTHKLIPIWIADYVLIGFGSGAVMGVPAHDERDLLFAEQFNLPVVSVLNKEGVCINSCCEGFHLDGLSGEEAKQYVINFLEENHLGAAKIAYKLRDWLFSRQRYWGEPIPIIHFEDGSCRPLRDYELPLLPPEIQDYRPEGVGQGPLAKVREWVQVFDTETQRAGKRETHTMPQWAGSCWYYLRFCDAHNSAAPWAKEKEQYWMPVDLYIGGAEHAVLHLLYARFWHQVFYEAGIVSTPEPFKKLVNQGLVLATSYRIPGKGYIYPEIAKEENGKWVAPSGEELDVRQEKMSKSKLNGVDPQILIDEFGADAVRMYAMFSGPLDKNKLWSNQGVAGCRRFLNRFYEMVSSDRVKEDNNFEGLSLAHKLVQRVTDAIEKLSLNTIPSSFMEFINDFVKLAVYPKSAVEMAVRALAPIAPHISEELWVLLGNSPGVQKSGWPSVLPEYLEGQTVTIVVQVNGKLRARLDIMKDASKEEVLALARESASKYLEGCEVKKAIFVPARLVNFVV.

The 'HIGH' region motif lies at 40–51 (PYPSGAGLHVGH). The 'KMSKS' region signature appears at 600 to 604 (KMSKS). K603 lines the ATP pocket.

Belongs to the class-I aminoacyl-tRNA synthetase family.

The protein resides in the cytoplasm. It catalyses the reaction tRNA(Leu) + L-leucine + ATP = L-leucyl-tRNA(Leu) + AMP + diphosphate. The chain is Leucine--tRNA ligase from Chlamydia trachomatis serovar D (strain ATCC VR-885 / DSM 19411 / UW-3/Cx).